A 273-amino-acid chain; its full sequence is Putative pyruvate, phosphate dikinase regulatory protein (273 aa).

151-158 (GVSRTSKT) lines the ADP pocket.

It belongs to the pyruvate, phosphate/water dikinase regulatory protein family. PDRP subfamily.

The catalysed reaction is N(tele)-phospho-L-histidyl/L-threonyl-[pyruvate, phosphate dikinase] + ADP = N(tele)-phospho-L-histidyl/O-phospho-L-threonyl-[pyruvate, phosphate dikinase] + AMP + H(+). The enzyme catalyses N(tele)-phospho-L-histidyl/O-phospho-L-threonyl-[pyruvate, phosphate dikinase] + phosphate + H(+) = N(tele)-phospho-L-histidyl/L-threonyl-[pyruvate, phosphate dikinase] + diphosphate. Bifunctional serine/threonine kinase and phosphorylase involved in the regulation of the pyruvate, phosphate dikinase (PPDK) by catalyzing its phosphorylation/dephosphorylation. This Desulfitobacterium hafniense (strain Y51) protein is Putative pyruvate, phosphate dikinase regulatory protein.